A 432-amino-acid chain; its full sequence is MSKIVKVIGREIIDSRGNPTVEAEVHLEGGFVGMAAAPSGASTGSREALELRDGDKSRFLGKGVTKAVGAVNGPIAQAILGKDAKDQAGIDKIMIDLDGTENKSNFGANAILAVSLANAKAAAAAKGMPLYEHIAELNGTPGKYSMPVPMMNIINGGEHADNNVDIQEFMIQPVGAKTVKEAIRMGSEVFHHLAKVLKGKGMNTAVGDEGGYAPNLGSNAEALAVIAEAVKAAGYELGKNITLAMDCAASEFYKDGKYVLAGEGNKAFTSEEFTHFLEELTKQYPIVSIEDGLDESDWDGFAYQTKVLGDKIQLVGDDLFVTNTKILKEGIEKGIANSILIKFNQIGSLTETLAAIKMAKDAGYTAVISHRSGETEDATIADLAVGTAAGQIKTGSMSRSDRVAKYNQLIRIEEALGEKAPYNGRKEIKGQA.

Residue Q167 coordinates (2R)-2-phosphoglycerate. E209 functions as the Proton donor in the catalytic mechanism. Positions 246, 290, and 317 each coordinate Mg(2+). Residues K342, R371, S372, and K393 each contribute to the (2R)-2-phosphoglycerate site. Catalysis depends on K342, which acts as the Proton acceptor.

It belongs to the enolase family. As to quaternary structure, component of the RNA degradosome, a multiprotein complex involved in RNA processing and mRNA degradation. Mg(2+) serves as cofactor.

Its subcellular location is the cytoplasm. The protein localises to the secreted. It is found in the cell surface. The enzyme catalyses (2R)-2-phosphoglycerate = phosphoenolpyruvate + H2O. It participates in carbohydrate degradation; glycolysis; pyruvate from D-glyceraldehyde 3-phosphate: step 4/5. Functionally, catalyzes the reversible conversion of 2-phosphoglycerate (2-PG) into phosphoenolpyruvate (PEP). It is essential for the degradation of carbohydrates via glycolysis. The chain is Enolase from Salmonella dublin (strain CT_02021853).